Reading from the N-terminus, the 356-residue chain is Biotin synthase (356 aa).

The 220-residue stretch at 51-270 (NKVQCNQLLN…IALARIMMPL (220 aa)) folds into the Radical SAM core domain. Residues Cys66, Cys70, and Cys73 each coordinate [4Fe-4S] cluster. Cys110, Cys141, Cys201, and Arg274 together coordinate [2Fe-2S] cluster. The segment at 310-356 (PGDNKDRSLFDRLGLEPRDDHGVHEHSSHSHTHDQGHDHGPHGHSHG) is disordered. Over residues 312-350 (DNKDRSLFDRLGLEPRDDHGVHEHSSHSHTHDQGHDHGP) the composition is skewed to basic and acidic residues.

The protein belongs to the radical SAM superfamily. Biotin synthase family. In terms of assembly, homodimer. Requires [4Fe-4S] cluster as cofactor. [2Fe-2S] cluster serves as cofactor.

The catalysed reaction is (4R,5S)-dethiobiotin + (sulfur carrier)-SH + 2 reduced [2Fe-2S]-[ferredoxin] + 2 S-adenosyl-L-methionine = (sulfur carrier)-H + biotin + 2 5'-deoxyadenosine + 2 L-methionine + 2 oxidized [2Fe-2S]-[ferredoxin]. It participates in cofactor biosynthesis; biotin biosynthesis; biotin from 7,8-diaminononanoate: step 2/2. Functionally, catalyzes the conversion of dethiobiotin (DTB) to biotin by the insertion of a sulfur atom into dethiobiotin via a radical-based mechanism. This chain is Biotin synthase, found in Rhodopseudomonas palustris (strain BisB18).